Consider the following 315-residue polypeptide: Acetaldehyde dehydrogenase 1 (315 aa).

Residue 12–15 participates in NAD(+) binding; that stretch reads SGNI. The Acyl-thioester intermediate role is filled by cysteine 132. NAD(+) contacts are provided by residues 163-171 and asparagine 291; that span reads SAGPGTRAN.

The protein belongs to the acetaldehyde dehydrogenase family.

It carries out the reaction acetaldehyde + NAD(+) + CoA = acetyl-CoA + NADH + H(+). This Paraburkholderia phymatum (strain DSM 17167 / CIP 108236 / LMG 21445 / STM815) (Burkholderia phymatum) protein is Acetaldehyde dehydrogenase 1.